A 442-amino-acid chain; its full sequence is MMNHPHSSHIGTTNVKEEIGKLDRIRISGIGLIAYAFMAVLLIIAISTKTLPNTMIGAIFALVLMGHVFYYLGAHLPIFRSYLGGGSVFTILLTAILVATNVIPKYVVTTASGFINGMDFLGLYIVSLIASSLFKMDRKMLLKAAVRFLPVAFISMALTAVVIGIVGVIIGVGFNYAILYIAMPIMAGGVGAGIVPLSGIYAHAMGVGSAGILSKLFPTVILGNLLAIISAGLISRIFKDSKGNGHGEILRGEREKSAAAEEIKPDYVQLGVGLIIAVMFFMIGTMLNKVFPGINAYAFIILSIVLTKAFGLLPKYYEDSVIMFGQVIVKNMTHALLAGVGLSLLDMHVLLAALSWQFVVLCLVSIVAISLISATLGKLFGLYPVEAAITAGLANNSMGGTGNVAVLAASERMNLIAFAQMGNRIGGALILVVAGILVTFMK.

The next 13 membrane-spanning stretches (helical) occupy residues 27-47 (ISGI…IAIS), 59-79 (IFAL…LPIF), 83-103 (LGGG…TNVI), 114-134 (FING…SSLF), 151-171 (VAFI…VIIG), 177-197 (AILY…IVPL), 209-229 (SAGI…LAII), 267-287 (YVQL…GTML), 293-313 (GINA…FGLL), 321-341 (VIMF…AGVG), 349-369 (VLLA…IVAI), 387-409 (AAIT…VLAA), and 421-441 (MGNR…VTFM).

Belongs to the 2-hydroxycarboxylate transporter (2-HCT) (TC 2.A.24) family.

The protein localises to the cell membrane. The catalysed reaction is (R)-lactate(in) + citrate(out) = (R)-lactate(out) + citrate(in). It carries out the reaction (S)-lactate(in) + citrate(out) = (S)-lactate(out) + citrate(in). The enzyme catalyses citrate(in) + H(+)(in) = citrate(out) + H(+)(out). With respect to regulation, the transport of citrate is unaffected by the presence of citrate in the growth media. In terms of biological role, secondary transporter involved in citrate metabolism. During cometabolism of citrate and glucose, catalyzes the uptake of divalent citrate into the cell coupled to the exit of monovalent lactate, the end product of glycolysis in L.lactis. The citrate/lactate exchange is electrogenic and results in the generation of a membrane potential. Plays an important role in resistance against lactate toxicity at low pH. In the absence of glucose, i.e. when no lactate is produced, CitP catalyzes the uptake of citrate in exchange with the citrate metabolism intermediates pyruvate and alpha-acetolactate, and the end product acetate. In the absence of glucose, CitP can also catalyze the proton-dependent transport of citrate. In vitro, shows a broad substrate specificity. Can transport a wide variety of mono- and dicarboxylates of the form X-CR(2)-COO(-), where X represents OH (2-hydroxy acid), O (2-keto acid), or H (acid) and R groups differ in size, hydrophobicity and composition. Many of the substrates are intermediates or products of amino acid metabolism, suggesting that CitP may have a broader physiological function than its role in citrate metabolism. This Lactococcus lactis subsp. lactis (Streptococcus lactis) protein is Citrate transporter CitP.